Here is a 93-residue protein sequence, read N- to C-terminus: Cobalt transport protein CbiN (93 aa).

2 consecutive transmembrane segments (helical) span residues 5-25 (LMLLVMVVALVILPFFINHGG) and 63-83 (LLFTLQGSLGAAVIFYILGYC).

This sequence belongs to the CbiN family. Forms an energy-coupling factor (ECF) transporter complex composed of an ATP-binding protein (A component, CbiO), a transmembrane protein (T component, CbiQ) and 2 possible substrate-capture proteins (S components, CbiM and CbiN) of unknown stoichimetry.

The protein localises to the cell inner membrane. It participates in cofactor biosynthesis; adenosylcobalamin biosynthesis. Its function is as follows. Part of the energy-coupling factor (ECF) transporter complex CbiMNOQ involved in cobalt import. The polypeptide is Cobalt transport protein CbiN (Salmonella paratyphi B (strain ATCC BAA-1250 / SPB7)).